Reading from the N-terminus, the 208-residue chain is V-type ATP synthase subunit D (208 aa).

This sequence belongs to the V-ATPase D subunit family.

Produces ATP from ADP in the presence of a proton gradient across the membrane. This chain is V-type ATP synthase subunit D, found in Streptococcus pyogenes serotype M49 (strain NZ131).